The sequence spans 472 residues: Transcription factor TGAL1 (472 aa).

The tract at residues 136–190 (WGESTIADTSPRTDTSTDPDTDERNQMFEQGQLAAPTASDSSDRSKDKLDHKTLR) is disordered. The span at 143-153 (DTSPRTDTSTD) shows a compositional bias: low complexity. Residues 176–187 (SSDRSKDKLDHK) show a composition bias toward basic and acidic residues. The region spanning 185-229 (DHKTLRRLAQNREAARKSRLRKKAYIQNLESSRLKLTQIEQELQR) is the bZIP domain. The basic motif stretch occupies residues 187 to 207 (KTLRRLAQNREAARKSRLRKK). The tract at residues 213–227 (LESSRLKLTQIEQEL) is leucine-zipper. Residues 252-469 (ALAFDMEYAR…RALSSLWLAR (218 aa)) enclose the DOG1 domain.

Belongs to the bZIP family. As to quaternary structure, isoforms 1 and 2 interact with NPR2/NH2. Isoform 2 interacts with NPR1/NH1 and NPR3/NH3.

It is found in the nucleus. Transcriptional regulator involved in defense response. The chain is Transcription factor TGAL1 from Oryza sativa subsp. japonica (Rice).